Consider the following 586-residue polypeptide: Methionine--tRNA ligase, mitochondrial (586 aa).

Residues 1 to 46 constitute a mitochondrion transit peptide; the sequence is MLRQCARWVLTRTRFGRGCRRYGSCSPSASGDAGEARAYFTTPIFY. Residues 45 to 55 carry the 'HIGH' region motif; sequence FYVNAAPHIGH. The 'KMSKS' region motif lies at 340-344; it reads KMSKS. Lysine 343 provides a ligand contact to ATP.

The protein belongs to the class-I aminoacyl-tRNA synthetase family.

The protein resides in the mitochondrion matrix. It carries out the reaction tRNA(Met) + L-methionine + ATP = L-methionyl-tRNA(Met) + AMP + diphosphate. The sequence is that of Methionine--tRNA ligase, mitochondrial (Mars2) from Mus musculus (Mouse).